Consider the following 331-residue polypeptide: Ketol-acid reductoisomerase (NADP(+)) (331 aa).

One can recognise a KARI N-terminal Rossmann domain in the interval 1–181; the sequence is MKMYYDADAD…GGTRAGVIET (181 aa). NADP(+) contacts are provided by residues 24–27, arginine 47, serine 50, and 82–85; these read YGSQ and DEKQ. Histidine 107 is a catalytic residue. Glycine 133 contacts NADP(+). Residues 182–327 form the KARI C-terminal knotted domain; the sequence is TFREETETDL…KKLRAMMPWL (146 aa). Mg(2+)-binding residues include aspartate 190, glutamate 194, glutamate 226, and glutamate 230. Serine 251 provides a ligand contact to substrate.

This sequence belongs to the ketol-acid reductoisomerase family. The cofactor is Mg(2+).

The catalysed reaction is (2R)-2,3-dihydroxy-3-methylbutanoate + NADP(+) = (2S)-2-acetolactate + NADPH + H(+). It catalyses the reaction (2R,3R)-2,3-dihydroxy-3-methylpentanoate + NADP(+) = (S)-2-ethyl-2-hydroxy-3-oxobutanoate + NADPH + H(+). It functions in the pathway amino-acid biosynthesis; L-isoleucine biosynthesis; L-isoleucine from 2-oxobutanoate: step 2/4. Its pathway is amino-acid biosynthesis; L-valine biosynthesis; L-valine from pyruvate: step 2/4. Involved in the biosynthesis of branched-chain amino acids (BCAA). Catalyzes an alkyl-migration followed by a ketol-acid reduction of (S)-2-acetolactate (S2AL) to yield (R)-2,3-dihydroxy-isovalerate. In the isomerase reaction, S2AL is rearranged via a Mg-dependent methyl migration to produce 3-hydroxy-3-methyl-2-ketobutyrate (HMKB). In the reductase reaction, this 2-ketoacid undergoes a metal-dependent reduction by NADPH to yield (R)-2,3-dihydroxy-isovalerate. This chain is Ketol-acid reductoisomerase (NADP(+)), found in Heliobacterium modesticaldum (strain ATCC 51547 / Ice1).